The chain runs to 98 residues: HssA/B-like protein 34 (98 aa).

Disordered stretches follow at residues 1–26 (MTLF…SFGS) and 60–98 (AKSS…SCSC). The span at 60 to 72 (AKSSGGSCGGKGG) shows a compositional bias: gly residues. A compositionally biased stretch (basic residues) spans 73–88 (SHNHGHGHGHGPHGHG). The segment covering 89–98 (GKGSGGSCSC) has biased composition (gly residues).

It belongs to the hssA/B family.

The chain is HssA/B-like protein 34 (hssl34) from Dictyostelium discoideum (Social amoeba).